The sequence spans 671 residues: tRNA(Met) cytidine acetyltransferase TmcA (671 aa).

Residues Gln-180, 202-211, and Arg-319 contribute to the ATP site; that span reads GRGKSALAGQ. Positions 349 to 531 constitute an N-acetyltransferase domain; the sequence is IRFSAFTQAL…SGCYTAMALL (183 aa). Acetyl-CoA contacts are provided by residues 461–463, 468–474, Glu-499, and Arg-506; these read IAV and QREGIGQ.

It belongs to the RNA cytidine acetyltransferase family. TmcA subfamily.

It is found in the cytoplasm. The enzyme catalyses cytidine(34) in elongator tRNA(Met) + acetyl-CoA + ATP + H2O = N(4)-acetylcytidine(34) in elongator tRNA(Met) + ADP + phosphate + CoA + H(+). Functionally, catalyzes the formation of N(4)-acetylcytidine (ac(4)C) at the wobble position of tRNA(Met), by using acetyl-CoA as an acetyl donor and ATP (or GTP). The polypeptide is tRNA(Met) cytidine acetyltransferase TmcA (Citrobacter koseri (strain ATCC BAA-895 / CDC 4225-83 / SGSC4696)).